Here is a 23-residue protein sequence, read N- to C-terminus: FENKVAEKQKLFQADNGLPVXLK.

It belongs to the cytochrome c oxidase VIIa family. In terms of assembly, component of the complex IV (CIV, cytochrome c oxidase), a multisubunit enzyme composed of 14 subunits. The complex is composed of a catalytic core of 3 subunits MT-CO1, MT-CO2 and MT-CO3, encoded in the mitochondrial DNA, and 11 supernumerary subunits COX4I1 (or COX4I2), COX5A, COX5B, COX6A2 (or COX6A1), COX6B1 (or COX6B2), COX6C, COX7A1 (or COX7A2), COX7B, COX7C, COX8B and NDUFA4, which are encoded in the nuclear genome. The complex exists as a monomer or a dimer and forms supercomplexes (SCs) in the inner mitochondrial membrane with NADH-ubiquinone oxidoreductase (complex I, CI) and ubiquinol-cytochrome c oxidoreductase (cytochrome b-c1 complex, complex III, CIII), resulting in different assemblies (supercomplex SCI(1)III(2)IV(1) and megacomplex MCI(2)III(2)IV(2)).

It localises to the mitochondrion inner membrane. It participates in energy metabolism; oxidative phosphorylation. Its function is as follows. Component of the mitochondrial respiratory complex IV (CIV, also named cytochrome c oxidase complex), the last enzyme in the mitochondrial electron transport chain which drives oxidative phosphorylation. The CIV complex is the component of the respiratory chain that catalyzes the reduction of oxygen to water. Acts as an assembly factor that specifically drives the homodimerization of CIV complexes, mediating the formation of mitochondrial respiratory supercomplexes (respirasomes) containing two CIV: supercomplxes with two molecules of CIV show improved activity. Despite being highly expressed in brown adipose tissue, not required for thermogenesis. The polypeptide is Cytochrome c oxidase subunit 7A1, mitochondrial (COX7A1) (Canis lupus familiaris (Dog)).